A 280-amino-acid chain; its full sequence is Dual adapter for phosphotyrosine and 3-phosphotyrosine and 3-phosphoinositide (280 aa).

Residues 1–20 are disordered; sequence MGRAELLEGKMSTQDPSDLW. Positions 35-129 constitute an SH2 domain; it reads WYHGNLTRHA…GTLMVLKHPY (95 aa). Y139 carries the phosphotyrosine modification. Residue S141 is modified to Phosphoserine. The 96-residue stretch at 164–259 folds into the PH domain; that stretch reads LGTKEGYLTK…WIKILRWKLS (96 aa).

Interacts with PtdIns(3,4,5)P3 and PLCG2. In vitro, interacts with PtdIns(3,4)P2. Phosphorylated on tyrosine residues. In terms of tissue distribution, highly expressed in placenta and lung, followed by brain, heart, kidney, liver, pancreas and skeletal muscle. Expressed by B-lymphocytes, but not T-lymphocytes or nonhematopoietic cells.

It is found in the cytoplasm. It localises to the membrane. In terms of biological role, may act as a B-cell-associated adapter that regulates B-cell antigen receptor (BCR)-signaling downstream of PI3K. The polypeptide is Dual adapter for phosphotyrosine and 3-phosphotyrosine and 3-phosphoinositide (DAPP1) (Homo sapiens (Human)).